The sequence spans 157 residues: 2-C-methyl-D-erythritol 2,4-cyclodiphosphate synthase (157 aa).

A divalent metal cation-binding residues include Asp8 and His10. 4-CDP-2-C-methyl-D-erythritol 2-phosphate-binding positions include 8–10 (DVH) and 34–35 (HS). Position 42 (His42) interacts with a divalent metal cation. Residues 56–58 (DIG), 61–65 (FPDTD), 100–106 (AQAPKMA), 132–135 (TTTE), Phe139, and Arg142 each bind 4-CDP-2-C-methyl-D-erythritol 2-phosphate.

It belongs to the IspF family. In terms of assembly, homotrimer. Requires a divalent metal cation as cofactor.

The enzyme catalyses 4-CDP-2-C-methyl-D-erythritol 2-phosphate = 2-C-methyl-D-erythritol 2,4-cyclic diphosphate + CMP. Its pathway is isoprenoid biosynthesis; isopentenyl diphosphate biosynthesis via DXP pathway; isopentenyl diphosphate from 1-deoxy-D-xylulose 5-phosphate: step 4/6. Its function is as follows. Involved in the biosynthesis of isopentenyl diphosphate (IPP) and dimethylallyl diphosphate (DMAPP), two major building blocks of isoprenoid compounds. Catalyzes the conversion of 4-diphosphocytidyl-2-C-methyl-D-erythritol 2-phosphate (CDP-ME2P) to 2-C-methyl-D-erythritol 2,4-cyclodiphosphate (ME-CPP) with a corresponding release of cytidine 5-monophosphate (CMP). The sequence is that of 2-C-methyl-D-erythritol 2,4-cyclodiphosphate synthase from Pseudomonas fluorescens (strain SBW25).